The primary structure comprises 272 residues: Putative MgpC-like protein MPN_102 (272 aa).

This sequence belongs to the MgpC family.

The protein is Putative MgpC-like protein MPN_102 of Mycoplasma pneumoniae (strain ATCC 29342 / M129 / Subtype 1) (Mycoplasmoides pneumoniae).